We begin with the raw amino-acid sequence, 3230 residues long: Helicase SRCAP (3230 aa).

The interval 1 to 71 (MQSSPSPAHP…GPPDGATVPL (71 aa)) is disordered. Positions 26-41 (GSNPVSPASSSSPASS) are enriched in low complexity. The region spanning 124-196 (LPKVPEPPRP…EQAKLRRIAS (73 aa)) is the HSA domain. 2 disordered regions span residues 253–547 (QPLT…EEDD) and 559–581 (EEQS…LGPK). Residues 257 to 273 (SSKAGSSPCLGSSSAAS) show a composition bias toward low complexity. A compositionally biased stretch (acidic residues) spans 283 to 313 (DDEDGDFQPQEDEEEDDEETIEVEEQQEGND). Residues 315–329 (EAQRREIELLRREGE) are compositionally biased toward basic and acidic residues. Low complexity predominate over residues 337-356 (RSLPPQLLEGPSSPSQTPSS). Residues 397-425 (DEDDEEFTANEEEAEDEEDTIAAEEQLEG) show a composition bias toward acidic residues. Positions 426-441 (EVDHAMELSELAREGE) are enriched in basic and acidic residues. 3 stretches are compositionally biased toward acidic residues: residues 462 to 490 (SEDE…EPPQ), 503 to 517 (RSED…EEET), and 524 to 533 (EESESEESED). Residues 630-795 (VTMYEKKLNG…WSLMHFLMPH (166 aa)) enclose the Helicase ATP-binding domain. 643–650 (DEMGLGKT) provides a ligand contact to ATP. Disordered stretches follow at residues 1017 to 1045 (APLG…PQVL), 1058 to 1125 (PPLI…PGSS), and 1138 to 1166 (TFPP…TPAP). Composition is skewed to pro residues over residues 1018 to 1030 (PLGP…PPGP) and 1058 to 1076 (PPLI…PPLQ). Low complexity predominate over residues 1093–1107 (LSGTSRPPTPTLSLK). Residues 1108–1123 (PTPPAPVRLSPAPPPG) are compositionally biased toward pro residues. Low complexity predominate over residues 1138-1160 (TFPPAAATTTSTTTATATTTAVP). Ser1172 is subject to Phosphoserine. Disordered stretches follow at residues 1320 to 1366 (GLTP…APMP), 1406 to 1425 (SLPG…PLAS), 1629 to 1760 (VPVM…ASPV), and 1839 to 1893 (SRLP…EEKR). The segment covering 1323–1336 (PVPPLAPAPRPPSS) has biased composition (pro residues). The span at 1337–1360 (GLPAVLNPRPTLTPGRLPTPTLGT) shows a compositional bias: low complexity. Residues 1675–1691 (PASTQTLALAPALAPTL) are compositionally biased toward low complexity. A compositionally biased stretch (polar residues) spans 1692–1733 (GGSSPSQTLSLGTGNPQGPFPTQTLSLTPASSLVPTPAQTLS). Pro residues predominate over residues 1750–1760 (PAPPLAPASPV). Residues 2044–2197 (KLQTLAVLLR…DMAIEGGNFT (154 aa)) enclose the Helicase C-terminal domain. Disordered regions lie at residues 2214 to 2233 (LEEP…EETV), 2271 to 2298 (FNEN…MSRA), 2327 to 2453 (VSRE…APAA), 2564 to 2583 (LELA…VPPK), 2598 to 3081 (KNLS…GRKS), and 3095 to 3230 (DLAD…KAKT). Residues 2215 to 2225 (EEPSSSSVPSA) show a composition bias toward low complexity. 3 stretches are compositionally biased toward basic and acidic residues: residues 2284–2298 (EAGR…MSRA), 2327–2358 (VSRE…RLPQ), and 2386–2403 (KAPE…RGAR). Residues 2438-2448 (RPAPRPRPTPA) show a composition bias toward pro residues. Composition is skewed to low complexity over residues 2564–2579 (LELA…SLSL) and 2600–2611 (LSLTPSAPSLTL). Residues 2669–2679 (EADRTSEELTE) show a composition bias toward basic and acidic residues. The segment covering 2694–2712 (VTAEVAAPSTSSSATSSPE) has biased composition (low complexity). A compositionally biased stretch (polar residues) spans 2782–2794 (SETSASPGSPSVR). The span at 2807–2817 (GPCEAAPSSSL) shows a compositional bias: low complexity. The span at 2856–2868 (VKRRRGRPPKKNR) shows a compositional bias: basic residues. The segment at residues 2857–2869 (KRRRGRPPKKNRS) is a DNA-binding region (a.T hook 1). A compositionally biased stretch (pro residues) spans 2913 to 2926 (IPGPQPLGPQPVHR). Positions 2936 to 2948 (KRRRGRPPKARDL) form a DNA-binding region, a.T hook 2. Positions 2953 to 2965 (TISSAGDGNSESR) are enriched in polar residues. The segment covering 2967 to 2982 (QPPPHPSPLTPLPPLL) has biased composition (pro residues). Over residues 2983–3002 (VCPTATVANTVTTVTISTSP) the composition is skewed to low complexity. The segment at residues 3004 to 3016 (KRKRGRPPKNPPS) is a DNA-binding region (a.T hook 3). The span at 3011–3020 (PKNPPSPRPS) shows a compositional bias: pro residues. The span at 3044–3053 (PQGQGESEGS) shows a compositional bias: low complexity. Positions 3168 to 3184 (SVEESEAEASGEEEEGD) are enriched in acidic residues.

Belongs to the SNF2/RAD54 helicase family. SWR1 subfamily. Interacts with CREBBP and EP300. May be part of a complex containing SRCAP, CREBBP, CARM1 and GRIP1. Component of the chromatin-remodeling SRCAP complex composed of at least SRCAP, DMAP1, RUVBL1, RUVBL2, ACTL6A, YEATS4, VPS72, ACTR6 and ZNHIT1. Component of a NuA4-related complex which contains EP400, TRRAP/PAF400, SRCAP, BRD8/SMAP, EPC1, DMAP1/DNMAP1, RUVBL1/TIP49, RUVBL2, actin, ACTL6A/BAF53A, VPS72 and YEATS4/GAS41. In terms of assembly, (Microbial infection) Interacts with hepatitis C virus (HCV) NS5A. As to quaternary structure, (Microbial infection) Interacts with human adenovirus 2 DBP.

The protein localises to the nucleus. In terms of biological role, catalytic component of the SRCAP complex which mediates the ATP-dependent exchange of histone H2AZ/H2B dimers for nucleosomal H2A/H2B, leading to transcriptional regulation of selected genes by chromatin remodeling. Acts as a coactivator for CREB-mediated transcription, steroid receptor-mediated transcription, and Notch-mediated transcription. In Homo sapiens (Human), this protein is Helicase SRCAP (SRCAP).